Consider the following 69-residue polypeptide: Conotoxin AbVIE (69 aa).

The signal sequence occupies residues 1–17 (VLIIAVLFLTACQLTTA). Positions 18 to 40 (ETSSRGKQKHRALRSTDKYSRMT) are excised as a propeptide. Intrachain disulfides connect C43–C57, C50–C61, and C56–C66.

It belongs to the conotoxin O1 superfamily. As to expression, expressed by the venom duct.

The protein localises to the secreted. In Conus abbreviatus (Abbreviated cone), this protein is Conotoxin AbVIE.